A 152-amino-acid chain; its full sequence is Transcriptional regulator MraZ (152 aa).

SpoVT-AbrB domains lie at 5–52 (ATLV…TLPE) and 81–124 (ASEC…DETT).

This sequence belongs to the MraZ family. In terms of assembly, forms oligomers.

The protein localises to the cytoplasm. It is found in the nucleoid. In terms of biological role, negatively regulates its own expression and that of the subsequent genes in the proximal part of the division and cell wall (dcw) gene cluster. Acts by binding directly to DNA. May also regulate the expression of genes outside the dcw cluster. This chain is Transcriptional regulator MraZ, found in Enterobacter sp. (strain 638).